Reading from the N-terminus, the 431-residue chain is Glutamate--tRNA ligase 2 (431 aa).

The 'HIGH' region motif lies at 6–16 (PSPTGDMHIGN). A 'KMSKS' region motif is present at residues 235–239 (KMSKR). ATP is bound at residue lysine 238.

The protein belongs to the class-I aminoacyl-tRNA synthetase family. Glutamate--tRNA ligase type 1 subfamily. Monomer.

The protein resides in the cytoplasm. The enzyme catalyses tRNA(Glu) + L-glutamate + ATP = L-glutamyl-tRNA(Glu) + AMP + diphosphate. Catalyzes the attachment of glutamate to tRNA(Glu) in a two-step reaction: glutamate is first activated by ATP to form Glu-AMP and then transferred to the acceptor end of tRNA(Glu). This is Glutamate--tRNA ligase 2 from Campylobacter jejuni subsp. doylei (strain ATCC BAA-1458 / RM4099 / 269.97).